A 337-amino-acid chain; its full sequence is Serpentine receptor class beta-6 (337 aa).

Transmembrane regions (helical) follow at residues 20–40 (QFYTLLTSIFSVFPLLYLIIF), 62–82 (ILISVLNNCVVFAHHVVIPFL), 98–118 (IFQNIGVFGISCPMLTILGIT), 138–158 (IGVFIGVFAMLCDMALVYFFF), 183–203 (WLCYSLLAINSVNLVFNYFLV), 234–254 (TFISFIHVFFFSLYLIFTLII), and 273–293 (GVYITIPTYNLIIGIASCVIL).

It belongs to the nematode receptor-like protein srb family. In terms of tissue distribution, expressed in the ADL, ADF and ASH chemosensory neurons in the head and in the PHA and PHB chemosensory neurons in the tail. Low expression also observed in the egg-laying structures in the mid-body region.

Its subcellular location is the cell membrane. Its function is as follows. Mediates recognition and avoidance of Streptomyces species by detecting dodecanoic acid secreted by the bacteria. Also mediates avoidance of decanoic acid which is not secreted by Streptomyces species but this may represent an additional important avoidance response in the environment. The protein is Serpentine receptor class beta-6 (srb-6) of Caenorhabditis elegans.